A 116-amino-acid chain; its full sequence is MHEMSIALSIVDAVDAQARVEGAGRISRVELVIGRLAGIEPESLRFCFPAAATGTLAEGAELDIEEIAAVAVCGACGFRFSVTFPVAECPECRSLRISVVSGEEFVIRSITIEEGD.

Ni(2+) is bound at residue His-2. Zn(2+)-binding residues include Cys-73, Cys-76, Cys-89, and Cys-92.

The protein belongs to the HypA/HybF family.

Functionally, involved in the maturation of [NiFe] hydrogenases. Required for nickel insertion into the metal center of the hydrogenase. The protein is Hydrogenase maturation factor HypA of Chlorobium limicola (strain DSM 245 / NBRC 103803 / 6330).